A 575-amino-acid chain; its full sequence is Transcription factor ncaA (575 aa).

2 stretches are compositionally biased toward polar residues: residues Met-1–Asn-15 and Asp-22–Pro-34. Disordered stretches follow at residues Met-1–Arg-40 and Ile-79–Glu-114. The segment at Asp-39–Lys-66 adopts a UBZ4-type; degenerate zinc-finger fold. The span at Gly-93–Met-102 shows a compositional bias: basic and acidic residues. A coiled-coil region spans residues Phe-337–Cys-371. Residues Gly-429–Ala-575 form a disordered region. Basic and acidic residues predominate over residues Leu-440–Glu-454. Over residues Glu-455 to Pro-471 the composition is skewed to low complexity. Residues Ser-472–Gly-485 are compositionally biased toward pro residues. Composition is skewed to polar residues over residues Asp-493–Tyr-513 and Ser-538–Leu-558.

In terms of assembly, interacts with atrR.

It is found in the nucleus. Its function is as follows. Transcription factor required for normal voriconazole resistance. Contributes to the function of atrR and regulates the expression of the atrR target gene abcG1. The chain is Transcription factor ncaA from Aspergillus fumigatus (strain ATCC MYA-4609 / CBS 101355 / FGSC A1100 / Af293) (Neosartorya fumigata).